We begin with the raw amino-acid sequence, 346 residues long: MDPARKAGAQAMIWTAGWLLLLLLRGGAQALECYSCVQKADDGCSPNKMKTVKCAPGVDVCTEAVGAVETIHGQFSLAVRGCGSGLPGKNDRGLDLHGLLAFIQLQQCAQDRCNAKLNLTSRALDPAGNESAYPPNGVECYSCVGLSREACQGTSPPVVSCYNASDHVYKGCFDGNVTLTAANVTVSLPVRGCVQDEFCTRDGVTGPGFTLSGSCCQGSRCNSDLRNKTYFSPRIPPLVRLPPPEPTTVASTTSVTTSTSAPVRPTSTTKPMPAPTSQTPRQGVEHEASRDEEPRLTGGAAGHQDRSNSGQYPAKGGPQQPHNKGCVAPTAGLAALLLAVAAGVLL.

A signal peptide spans 1 to 30 (MDPARKAGAQAMIWTAGWLLLLLLRGGAQA). UPAR/Ly6 domains follow at residues 33–126 (CYSC…ALDP) and 140–222 (CYSC…SRCN). Residues N118, N163, N176, and N183 are each glycosylated (N-linked (GlcNAc...) asparagine). Positions 233 to 324 (PRIPPLVRLP…KGGPQQPHNK (92 aa)) are disordered. Residues 234–246 (RIPPLVRLPPPEP) show a composition bias toward pro residues. Over residues 247 to 269 (TTVASTTSVTTSTSAPVRPTSTT) the composition is skewed to low complexity. Residues 283–295 (GVEHEASRDEEPR) are compositionally biased toward basic and acidic residues. C326 carries GPI-anchor amidated cysteine lipidation. Positions 327–346 (VAPTAGLAALLLAVAAGVLL) are cleaved as a propeptide — removed in mature form.

As to quaternary structure, binds laminin-1 and laminin-5. Interacts with LGALS3. Interacts with AGR2 and AGR3. In terms of processing, N-glycosylated and O-glycosylated. In terms of tissue distribution, expressed in placenta, skin and urothelium. Found in suprabasal keratinocytes of chronic wounds. Weak expression is found in esophagus and peripheral blood mononuclear cells. Found in the majority of primary and metastatic transitional cell carcinomas (TCCs) and as well in breast cancer tissues, but not in adjacent normal tissues. High expression is found in the tumor component of some noninvasive superficial lesions and in invasive and metastatic urothelial cancers.

Its subcellular location is the cell membrane. In terms of biological role, supports cell migration. May be involved in urothelial cell-matrix interactions. May be involved in tumor progression. This is Ly6/PLAUR domain-containing protein 3 (LYPD3) from Homo sapiens (Human).